The following is a 230-amino-acid chain: uncharacterized protein (230 aa).

A helical membrane pass occupies residues 93-115 (VFLYYFLIVYTSGNVDLISRFLF).

This sequence belongs to the DUP/COS family.

It localises to the membrane. This is an uncharacterized protein from Saccharomyces cerevisiae (strain ATCC 204508 / S288c) (Baker's yeast).